The chain runs to 225 residues: uncharacterized protein (225 aa).

6 helical membrane-spanning segments follow: residues Met25 to Leu45, Val57 to Ala77, Phe83 to Ile103, Leu109 to Thr129, Leu135 to Val155, and Ile187 to Val207.

The protein resides in the cell membrane. This is an uncharacterized protein from Mycoplasma pneumoniae (strain ATCC 29342 / M129 / Subtype 1) (Mycoplasmoides pneumoniae).